A 311-amino-acid polypeptide reads, in one-letter code: Mas-related G-protein coupled receptor member E (311 aa).

Topologically, residues 1–25 (MEPREAGQHAGAADGAQEDVAFNLV) are extracellular. A helical membrane pass occupies residues 26-46 (ILSLTEGLGLGGLLGNGAVLW). Residues 47 to 63 (LLSSNVYRNPFAIYLLD) are Cytoplasmic-facing. The helical transmembrane segment at 64 to 84 (VACADLIFLGCHMVAIIPDLL) threads the bilayer. Over 85–95 (QGRLDFPGFVQ) the chain is Extracellular. The chain crosses the membrane as a helical span at residues 96 to 116 (TSLATLRFFCYIVGLSLLVAV). Residues 117 to 136 (SVEQCLAALFPAWYSCRRPR) lie on the Cytoplasmic side of the membrane. A helical transmembrane segment spans residues 137–157 (HLTTCVCALTWACCLLLHLLL). The Extracellular segment spans residues 158–177 (SGACTQFFGEPSRHLCRTLW). Residues 178 to 198 (LVAAVLLAVLCCTMCGASLML) form a helical membrane-spanning segment. The Cytoplasmic portion of the chain corresponds to 199 to 216 (LLQVERGPQRPPPRGFPT). Residues 217–237 (LILLAVLLFLFCGLPFGIYWL) form a helical membrane-spanning segment. The Extracellular segment spans residues 238–251 (SRNLLWHIPHYFYH). Residues 252 to 272 (FSFLTAAVYCAAKPVVYFCLG) traverse the membrane as a helical segment. At 273–311 (SAQGRRLPLRLVLQRALGDEAELGAVRETSRRGLVDIAA) the chain is on the cytoplasmic side.

This sequence belongs to the G-protein coupled receptor 1 family. Mas subfamily.

It localises to the cell membrane. Functionally, orphan receptor. May regulate nociceptor function and/or development, including the sensation or modulation of pain. In Macaca fascicularis (Crab-eating macaque), this protein is Mas-related G-protein coupled receptor member E (MRGPRE).